The primary structure comprises 224 residues: UPF0758 protein PFL_6051 (224 aa).

The MPN domain maps to 102–224 (ALENPLVVRD…PLSMAEYGWI (123 aa)). Zn(2+)-binding residues include His-173, His-175, and Asp-186. The JAMM motif motif lies at 173 to 186 (HNHPSGICEPSPAD).

It belongs to the UPF0758 family.

This is UPF0758 protein PFL_6051 from Pseudomonas fluorescens (strain ATCC BAA-477 / NRRL B-23932 / Pf-5).